The sequence spans 905 residues: MSAKLLYNLSDENPNLNKQFGCMNGIFQVFYRQHCPATPVTVSGGAEKSLPPGERRGSVGETNMESDKETERSSTKKKKSAAKEKHRVSFESSSRPSFSSSPRSSSFSSAEVSTTASQFDQPGENLIREQPNGGLMMPYDLKELVKGSINREIRTRGEEASFTQQQQPISARSSMLLLKESSLRSPCRSSNEWNEGRGAAMKFKESHRLSYDEREMRNNGFRVGSKLKETPRLSLDSRSNSFRSPRADAARSSCPEEPATMTHRRSSSSVVAKLMGLEVIADNSDTEQRRENRFCDSPRPMSRVEPTALQRSRSVDSIKRIPASAASKFPMEPAPWKQMKAGDSALTVYGEIQKRLTQLEFKKSGKDLRALKQILEAMEKTQQLIDESRDDGTLSTTTLMQRTHKPVSAATSPARNFKSSSIVVMKSAAPVSTSPLPQNVTLPNVKVGNSRQTRKVTSGKQNAMDLTPRPGLYKGQLDSTKSNSPKTVRSRQALAADAGSMTKSGRSQQHSVSPRTQPKKLGFEKQTRPTTPKSEPGKRQLGRQQTEVASPRRKQMIKPHSTLQQPDDRLSDARSDLRSLRSDSNISLGSNVDIEVTSRHRLERNCDFPEQHTPKQRSPDFGIKQDRPSLKPLKVTVEQPSPVSVLDAVFDEEDSPSPVRKISLSFKEEDALRSEESEWINKPTSFCRSVPFPQSNRGPMKPSSDHFECSPEEGADFKSGNHKYILEILLASGILRDLEYSMISFQLHQTRLPINPGLFFILEQNKASNVTLPDNKHRGRGFRQQQTNPTETIRRKLVFDTVNEILARKFTAEGCIKPRLIANPLKKLEKISKEEQLLQTLCSEIDRLQQNNSNCILEDDEEDIIWEDLQSQSMNLKEFEGETPGIVLDIERMIFRDLVNEVCFC.

Disordered regions lie at residues 42 to 136 (VSGG…GGLM), 232 to 268 (RLSLDSRSNSFRSPRADAARSSCPEEPATMTHRRSSS), 285 to 315 (DTEQRRENRFCDSPRPMSRVEPTALQRSRSV), 432 to 585 (STSP…SDSN), 606 to 626 (CDFPEQHTPKQRSPDFGIKQD), and 690 to 711 (VPFPQSNRGPMKPSSDHFECSP). The span at 65–74 (ESDKETERSS) shows a compositional bias: basic and acidic residues. A compositionally biased stretch (low complexity) spans 90–117 (FESSSRPSFSSSPRSSSFSSAEVSTTAS). Residues 286-296 (TEQRRENRFCD) show a composition bias toward basic and acidic residues. 3 stretches are compositionally biased toward polar residues: residues 432-461 (STSPLPQNVTLPNVKVGNSRQTRKVTSGKQ), 477-487 (LDSTKSNSPKT), and 501-516 (MTKSGRSQQHSVSPRT). Positions 566 to 581 (PDDRLSDARSDLRSLR) are enriched in basic and acidic residues.

As to quaternary structure, interacts (via C-terminus) with TON1A and TON1B.

It localises to the cytoplasm. It is found in the cytoskeleton. Its function is as follows. In association with LNG1, regulates leaf morphology by promoting longitudinal polar cell elongation independently of ROT3. Associates with microtubules and recruits TON1A and TON1B to the cytoskeleton through its C-terminus. The protein is Protein LONGIFOLIA 2 (LNG2) of Arabidopsis thaliana (Mouse-ear cress).